Consider the following 338-residue polypeptide: Cytoskeleton protein RodZ (338 aa).

Over 1–111 (MNTEATHDQN…LGKRRKKRDG (111 aa)) the chain is Cytoplasmic. One can recognise an HTH cro/C1-type domain in the interval 19–71 (LRNAREQLGLSQQAVAERLCLKVSTVRDIEEDKAPADLASTFLRGYIRSYARL). A DNA-binding region (H-T-H motif) is located at residues 30 to 49 (QQAVAERLCLKVSTVRDIEE). The chain crosses the membrane as a helical; Signal-anchor for type II membrane protein span at residues 112–132 (WLMTFTWLVLFVVIGLSGAWW). The Periplasmic segment spans residues 133 to 338 (WQDHKAQQEE…TLNAEQSPAQ (206 aa)). Residues 155 to 169 (NANGTNSQSIPLENS) show a composition bias toward polar residues. Residues 155-240 (NANGTNSQSI…TTPDTATPLP (86 aa)) form a disordered region. Residues 170–188 (TTTVPEATPAPAAPVDTTA) are compositionally biased toward low complexity. Positions 203-217 (EPQQNAVVPPSQANV) are enriched in polar residues. The span at 218 to 240 (DTATTAPAAPATTTTPDTATPLP) shows a compositional bias: low complexity.

The protein belongs to the RodZ family.

Its subcellular location is the cell inner membrane. Cytoskeletal protein that is involved in cell-shape control through regulation of the length of the long axis. This Escherichia fergusonii (strain ATCC 35469 / DSM 13698 / CCUG 18766 / IAM 14443 / JCM 21226 / LMG 7866 / NBRC 102419 / NCTC 12128 / CDC 0568-73) protein is Cytoskeleton protein RodZ.